Reading from the N-terminus, the 391-residue chain is Ferrochelatase (391 aa).

Residues H196 and E281 each contribute to the Fe cation site.

This sequence belongs to the ferrochelatase family.

The protein localises to the cytoplasm. The catalysed reaction is heme b + 2 H(+) = protoporphyrin IX + Fe(2+). It functions in the pathway porphyrin-containing compound metabolism; protoheme biosynthesis; protoheme from protoporphyrin-IX: step 1/1. Catalyzes the ferrous insertion into protoporphyrin IX. The protein is Ferrochelatase of Prochlorococcus marinus (strain MIT 9301).